The primary structure comprises 219 residues: 2-C-methyl-D-erythritol 4-phosphate cytidylyltransferase (219 aa).

It belongs to the IspD/TarI cytidylyltransferase family. IspD subfamily.

The catalysed reaction is 2-C-methyl-D-erythritol 4-phosphate + CTP + H(+) = 4-CDP-2-C-methyl-D-erythritol + diphosphate. It functions in the pathway isoprenoid biosynthesis; isopentenyl diphosphate biosynthesis via DXP pathway; isopentenyl diphosphate from 1-deoxy-D-xylulose 5-phosphate: step 2/6. Functionally, catalyzes the formation of 4-diphosphocytidyl-2-C-methyl-D-erythritol from CTP and 2-C-methyl-D-erythritol 4-phosphate (MEP). This Phocaeicola vulgatus (strain ATCC 8482 / DSM 1447 / JCM 5826 / CCUG 4940 / NBRC 14291 / NCTC 11154) (Bacteroides vulgatus) protein is 2-C-methyl-D-erythritol 4-phosphate cytidylyltransferase.